We begin with the raw amino-acid sequence, 589 residues long: Guanylate-binding protein 2 (589 aa).

The segment at 1–309 (MASEIHMSEP…GAISNGSLPC (309 aa)) is GTPase domain (Globular). The region spanning 35–276 (TQPVVVVAIV…FTSYILSYSS (242 aa)) is the GB1/RHD3-type G domain. GTP contacts are provided by residues 45–52 (GLYRTGKS), 181–182 (RD), and leucine 245. The residue at position 586 (cysteine 586) is a Cysteine methyl ester. Cysteine 586 carries S-geranylgeranyl cysteine lipidation. A propeptide spans 587-589 (TIL) (removed in mature form).

The protein belongs to the TRAFAC class dynamin-like GTPase superfamily. GB1/RHD3 GTPase family. GB1 subfamily. Homodimer; homodimerization occurs upon GTP-binding and is required for the association with membranous structures. Heterodimer with other family members, including GBP1, GBP3, GBP4 and GBP5. In terms of processing, isoprenylation is required for proper subcellular location.

The protein resides in the cytoplasmic vesicle membrane. Its subcellular location is the golgi apparatus membrane. The protein localises to the cytoplasm. It is found in the perinuclear region. The catalysed reaction is GTP + H2O = GDP + phosphate + H(+). Interferon (IFN)-inducible GTPase that plays important roles in innate immunity against a diverse range of bacterial, viral and protozoan pathogens. Hydrolyzes GTP to GMP in 2 consecutive cleavage reactions, but the major reaction product is GDP. Following infection, recruited to the pathogen-containing vacuoles or vacuole-escaped bacteria and acts as a positive regulator of inflammasome assembly by promoting the release of inflammasome ligands from bacteria. Acts by promoting lysis of pathogen-containing vacuoles, releasing pathogens into the cytosol. Following pathogen release in the cytosol, promotes recruitment of proteins that mediate bacterial cytolysis, such as Gm12250/Irgb10: this liberates ligands that are detected by inflammasomes, such as lipopolysaccharide (LPS) that activates the non-canonical CASP4/CASP11 inflammasome or double-stranded DNA (dsDNA) that activates the AIM2 inflammasome. Confers protection to the protozoan pathogen Toxoplasma gondii. Independently of its GTPase activity, acts as an inhibitor of various viruses infectivity by inhibiting FURIN-mediated maturation of viral envelope proteins. This chain is Guanylate-binding protein 2, found in Mus musculus (Mouse).